Consider the following 638-residue polypeptide: 3D-(3,5/4)-trihydroxycyclohexane-1,2-dione hydrolase (638 aa).

A thiamine diphosphate-binding site is contributed by glutamate 67. The tract at residues 442–523 is thiamine pyrophosphate binding; sequence SLPGDLQRLW…INIMLFDNSG (82 aa). Mg(2+) is bound by residues aspartate 494 and asparagine 521.

The protein belongs to the TPP enzyme family. It depends on Mg(2+) as a cofactor. Requires thiamine diphosphate as cofactor.

It catalyses the reaction 3D-3,5/4-trihydroxycyclohexane-1,2-dione + H2O = 5-deoxy-D-glucuronate + H(+). Its pathway is polyol metabolism; myo-inositol degradation into acetyl-CoA; acetyl-CoA from myo-inositol: step 3/7. Its function is as follows. Involved in the cleavage of the C1-C2 bond of 3D-(3,5/4)-trihydroxycyclohexane-1,2-dione (THcHDO) to yield 5-deoxy-glucuronate (5DG). The sequence is that of 3D-(3,5/4)-trihydroxycyclohexane-1,2-dione hydrolase from Listeria monocytogenes serovar 1/2a (strain ATCC BAA-679 / EGD-e).